A 194-amino-acid chain; its full sequence is Fe/S biogenesis protein NfuA (194 aa).

Residues Cys-151 and Cys-154 each coordinate [4Fe-4S] cluster.

Belongs to the NfuA family. As to quaternary structure, homodimer. It depends on [4Fe-4S] cluster as a cofactor.

Its function is as follows. Involved in iron-sulfur cluster biogenesis. Binds a 4Fe-4S cluster, can transfer this cluster to apoproteins, and thereby intervenes in the maturation of Fe/S proteins. Could also act as a scaffold/chaperone for damaged Fe/S proteins. In Vibrio vulnificus (strain CMCP6), this protein is Fe/S biogenesis protein NfuA.